The sequence spans 853 residues: DNA mismatch repair protein MutS (853 aa).

Residue 614-621 (GPNMGGKS) participates in ATP binding.

Belongs to the DNA mismatch repair MutS family.

Functionally, this protein is involved in the repair of mismatches in DNA. It is possible that it carries out the mismatch recognition step. This protein has a weak ATPase activity. This is DNA mismatch repair protein MutS from Escherichia coli O127:H6 (strain E2348/69 / EPEC).